The following is a 2471-amino-acid chain: Histidine protein kinase 1 (2471 aa).

The segment covering 1-10 (MSMNFFNSSE) has biased composition (polar residues). Disordered regions lie at residues 1-30 (MSMN…TEHY), 52-75 (ETKK…VPPS), and 395-415 (RQGS…FNIG). Residues 11 to 30 (PARDHKPDQEKETVMTTEHY) show a composition bias toward basic and acidic residues. A Protein kinase domain is found at 358-636 (EHPSQSTDQK…DCHSLLHDLI (279 aa)). A Histidine kinase domain is found at 2004 to 2225 (NMSHEIRTPF…TFYVSVIMDA (222 aa)). His2007 is subject to Phosphohistidine; by autocatalysis. A Response regulatory domain is found at 2340–2466 (RILLAEDNLL…ELRRILTKVG (127 aa)). The residue at position 2394 (Asp2394) is a 4-aspartylphosphate.

The phosphorelay mechanism involves the sequential transfer of a phosphate group from His-2007 (H1) in the histidine kinase domain (transmitter domain) to Asp-2394 (D1) of the response regulatory domain (receiver domain). This transfer probably occurs between two CHK1 molecules, rather than intramolecularly.

It catalyses the reaction ATP + protein L-histidine = ADP + protein N-phospho-L-histidine.. In terms of biological role, histidine kinase involved in a two-component signaling pathway that regulates cell wall mannan and glucan biosynthesis. Regulates quorum sensing as well as hyphal formation, biofilm formation, chlamidospore formation, and virulence. Plays a prominent role in phagocyte activation. Involved in the covering of the most potent pro-inflammatory cell wall molecules, the beta-glucans, underneath a dense mannan layer, so that the pathogen becomes partly invisible for immune cells such as phagocytes. The polypeptide is Histidine protein kinase 1 (CHK1) (Candida albicans (strain SC5314 / ATCC MYA-2876) (Yeast)).